A 335-amino-acid polypeptide reads, in one-letter code: Beta-ketoacyl-[acyl-carrier-protein] synthase III 3 (335 aa).

Active-site residues include Cys114 and His256. An ACP-binding region spans residues 257-261 (QANHR). Asn286 is an active-site residue.

It belongs to the thiolase-like superfamily. FabH family. In terms of assembly, homodimer.

The protein localises to the cytoplasm. The catalysed reaction is malonyl-[ACP] + acetyl-CoA + H(+) = 3-oxobutanoyl-[ACP] + CO2 + CoA. Its pathway is lipid metabolism; fatty acid biosynthesis. In terms of biological role, catalyzes the condensation reaction of fatty acid synthesis by the addition to an acyl acceptor of two carbons from malonyl-ACP. Catalyzes the first condensation reaction which initiates fatty acid synthesis and may therefore play a role in governing the total rate of fatty acid production. Possesses both acetoacetyl-ACP synthase and acetyl transacylase activities. Its substrate specificity determines the biosynthesis of branched-chain and/or straight-chain of fatty acids. In Streptomyces coelicolor (strain ATCC BAA-471 / A3(2) / M145), this protein is Beta-ketoacyl-[acyl-carrier-protein] synthase III 3.